We begin with the raw amino-acid sequence, 35 residues long: Fatty acid synthase (35 aa).

The active site involves Ser-12.

As to quaternary structure, homodimer which is arranged in a head to tail fashion. Interacts with CEACAM1; this interaction is insulin and phosphorylation-dependent; reduces fatty-acid synthase activity.

It localises to the cytoplasm. It is found in the melanosome. The enzyme catalyses acetyl-CoA + n malonyl-CoA + 2n NADPH + 2n H(+) = a long-chain fatty acid + (n+1) CoA + n CO2 + 2n NADP(+).. Fatty acid synthetase catalyzes the formation of long-chain fatty acids from acetyl-CoA, malonyl-CoA and NADPH. This multifunctional protein has 7 catalytic activities as an acyl carrier protein. Its function is as follows. This fragment is from the acyltransferase domain of the fatty acid synthetase. The polypeptide is Fatty acid synthase (FASN) (Capra hircus (Goat)).